Here is an 821-residue protein sequence, read N- to C-terminus: Cell wall integrity transcriptional regulator CAS5 (821 aa).

5 disordered regions span residues His42 to His66, Phe219 to Pro245, Thr305 to Gln432, Gln544 to Leu576, and Val607 to Cys750. A compositionally biased stretch (polar residues) spans Pro222–Pro245. Residues Thr305–Asn318 are compositionally biased toward low complexity. Residues Pro319–Ser329 are compositionally biased toward polar residues. The segment covering Gln372–Lys387 has biased composition (basic residues). The segment covering Gln396–Gln412 has biased composition (low complexity). Polar residues predominate over residues Gln422 to Gln432. A compositionally biased stretch (acidic residues) spans Glu545–Glu561. Composition is skewed to low complexity over residues Leu662–Thr674 and Lys684–Asp693. Residues Asn694–Gly714 are compositionally biased toward acidic residues. 2 C2H2-type zinc fingers span residues His748–His770 and Phe776–His801. Ser769 carries the phosphoserine modification.

Phosphorylation at Ser-769 and probably additional serine residues. GLC7 dephosphorylates CAS5 in response to cell wall stress which leads to its translocation to the nucleus.

It localises to the nucleus. Its subcellular location is the cytoplasm. Its function is as follows. Transcription factor that acts with ADA2 to promote cell wall integrity. Regulates the expression of target genes in concert with the transcriptional regulators SWI4 and SWI6. Crucial for proper cell cycle dynamics and responses to echinocandins, which inhibit beta-1,3-glucan synthesis. Has distinct transcriptional targets under basal and stress conditions. Also regulates a transcriptional network that influences the response to fluconazole. Plays a key role in adherence, hyphal development, and virulence. Acts as a repressor of hypha-specific genes during yeast-form growth. This Candida albicans (strain SC5314 / ATCC MYA-2876) (Yeast) protein is Cell wall integrity transcriptional regulator CAS5.